The primary structure comprises 116 residues: Flagellar transcriptional regulator FlhD (116 aa).

Belongs to the FlhD family. In terms of assembly, homodimer; disulfide-linked. Forms a heterohexamer composed of two FlhC and four FlhD subunits. Each FlhC binds a FlhD dimer, forming a heterotrimer, and a hexamer assembles by dimerization of two heterotrimers.

It localises to the cytoplasm. Its function is as follows. Functions in complex with FlhC as a master transcriptional regulator that regulates transcription of several flagellar and non-flagellar operons by binding to their promoter region. Activates expression of class 2 flagellar genes, including fliA, which is a flagellum-specific sigma factor that turns on the class 3 genes. Also regulates genes whose products function in a variety of physiological pathways. This chain is Flagellar transcriptional regulator FlhD, found in Pantoea ananatis (strain LMG 20103).